A 596-amino-acid chain; its full sequence is Ubiquilin-4 (596 aa).

A Ubiquitin-like domain is found at 13–87 (IRVTVKTPKD…VHLVIKTPQK (75 aa)). Glycyl lysine isopeptide (Lys-Gly) (interchain with G-Cter in SUMO2) cross-links involve residues lysine 23 and lysine 62. A disordered region spans residues 89-148 (QDPVTAAASPPSTPDSASAPSTTPASPAAAPVQPCSSGNTTSDAGSGGGPSPVAAEGPSS). Low complexity-rich tracts occupy residues 93-119 (TAAASPPSTPDSASAPSTTPASPAAAP) and 139-148 (SPVAAEGPSS). Serine 139 carries the post-translational modification Phosphoserine. STI1 domains lie at 187–224 (NPEMLSQIMENPLVQDMMSNPDLMRHMIMANPQMQQLM) and 225–256 (ERNPEISHMLNNPELMRQTMELARNPAMMQEM). Residue threonine 282 is modified to Phosphothreonine. Residues 297–361 (GNNPFSSLAG…QVHPTVSNPF (65 aa)) form a disordered region. The segment covering 302–313 (SSLAGNSDNSSS) has biased composition (low complexity). Serine 313 carries the post-translational modification Phosphoserine. Residues 324 to 335 (LPNPWSPSPPTS) are compositionally biased toward pro residues. The span at 339-349 (GSGGEGTGGSG) shows a compositional bias: gly residues. Over residues 352–361 (QVHPTVSNPF) the composition is skewed to polar residues. STI1 domains are found at residues 388 to 435 (NPQL…QEQL) and 439 to 471 (LPVFLQQMQNPESLSILTNPRAMQALLQIQQGL). The tract at residues 482–528 (VPSLGSFGTPRTSVPLAGSNSGSSAEAPTSSPGVPATSPPSAGSNAQ) is disordered. The span at 499-513 (GSNSGSSAEAPTSSP) shows a compositional bias: polar residues. The region spanning 548-593 (PMPEVRFQQQLEQLNSMGFINREANLQALIATGGDINAAIERLLGS) is the UBA domain.

As to quaternary structure, homooligomer. Binds signal sequences of proteins that are targeted to the endoplasmic reticulum. Interacts (via UBA domain) with GJA1 (not ubiquitinated) and with ubiquitin; both compete for the same binding site. Interacts (via UBA domain) with ubiquitin and with polyubiquitin chains. Interacts (via ubiquitin-like domain) with PSMD2 and PSMD4, regulatory subunits of the 26S proteasome. Interacts with ATXN1/SCA1; interaction with ATXN1 inhibits polyubiquitination of UBQLN4 and interferes with PSMD4 binding. Interacts with HERPUD1. Interacts (via ubiquitin-like domain) with UBQLN1 (via UBA domain). Interacts with UBQLN2. Interacts (via STI1 1 and 2 domains) with MAP1LC3A/B/C. Interacts with BAG6. Interacts with MRE11 (when ubiquitinated); interaction with ubiquitinated MRE11 leads to MRE11 removal from chromatin. Interacts with DESI1/POST; leading to nuclear export. Interacts with BCL2A1 and BCL2L10. In terms of processing, phosphorylated by ATM at Ser-313 in response to DNA damage, leading to localization in the nucleus and recruitment to sites of DNA damage. Ubiquitinated; this does not lead to proteasomal degradation. May undergo both 'Lys-48'- and 'Lys-63'-linked polyubiquitination. As to expression, detected in testis, ovary, thyroid, kidney, thymus, heart, liver, lung and spleen (at protein level). Highly expressed in heart, skeletal muscle, kidney, liver and brain. Detected at lower levels in testis, lung and spleen.

Its subcellular location is the nucleus. It localises to the cytoplasm. The protein localises to the chromosome. It is found in the endoplasmic reticulum. The protein resides in the perinuclear region. Its subcellular location is the cytoplasmic vesicle. It localises to the autophagosome. Its function is as follows. Regulator of protein degradation that mediates the proteasomal targeting of misfolded, mislocalized or accumulated proteins. Acts by binding polyubiquitin chains of target proteins via its UBA domain and by interacting with subunits of the proteasome via its ubiquitin-like domain. Key regulator of DNA repair that represses homologous recombination repair: in response to DNA damage, recruited to sites of DNA damage following phosphorylation by ATM and acts by binding and removing ubiquitinated MRE11 from damaged chromatin, leading to MRE11 degradation by the proteasome. MRE11 degradation prevents homologous recombination repair, redirecting double-strand break repair toward non-homologous end joining (NHEJ). Specifically recognizes and binds mislocalized transmembrane-containing proteins and targets them to proteasomal degradation. Collaborates with DESI1/POST in the export of ubiquitinated proteins from the nucleus to the cytoplasm. Plays a role in the regulation of the proteasomal degradation of non-ubiquitinated GJA1. Acts as an adapter protein that recruits UBQLN1 to the autophagy machinery. Mediates the association of UBQLN1 with autophagosomes and the autophagy-related protein LC3 (MAP1LC3A/B/C) and may assist in the maturation of autophagosomes to autolysosomes by mediating autophagosome-lysosome fusion. This chain is Ubiquilin-4, found in Mus musculus (Mouse).